The sequence spans 782 residues: LPS-assembly protein LptD (782 aa).

A signal peptide spans 1 to 23; the sequence is MNKKHTLISLAILTALYSQQSLA.

This sequence belongs to the LptD family. As to quaternary structure, component of the lipopolysaccharide transport and assembly complex. Interacts with LptE and LptA.

Its subcellular location is the cell outer membrane. Functionally, together with LptE, is involved in the assembly of lipopolysaccharide (LPS) at the surface of the outer membrane. In Haemophilus influenzae (strain 86-028NP), this protein is LPS-assembly protein LptD.